A 215-amino-acid polypeptide reads, in one-letter code: MKLYQKFPETQVITTKGPLDFYRDVFEKGKWLFLFAHPADFTPVCTTEFVGFSKVYEEFKRLNVELVGMSVDSIYSHIEWLKDIQERYGIQVPFPLIADPDKRLARLLDIIDEASGVTIRAVFLVNPEGIIRFMAYYPIEYGRKIEELLRITKAALVNYKAKVSLPVDWEPGQEVIVPAPSTIDEAQIRMKLPNAKTWYLTFKKYDELPQDQRVV.

Positions 1-157 (MKLYQKFPET…LLRITKAALV (157 aa)) constitute a Thioredoxin domain. The Cysteine sulfenic acid (-SOH) intermediate role is filled by Cys-45. Residue Arg-120 participates in substrate binding.

This sequence belongs to the peroxiredoxin family. Prx6 subfamily. In terms of assembly, homodecamer. Pentamer of dimers that assemble into a ring structure.

The protein resides in the cytoplasm. It catalyses the reaction a hydroperoxide + [thioredoxin]-dithiol = an alcohol + [thioredoxin]-disulfide + H2O. Its function is as follows. Thiol-specific peroxidase that catalyzes the reduction of hydrogen peroxide and organic hydroperoxides to water and alcohols, respectively. Plays a role in cell protection against oxidative stress by detoxifying peroxides. In Sulfuracidifex metallicus (Sulfolobus metallicus), this protein is Peroxiredoxin 1.